Here is a 78-residue protein sequence, read N- to C-terminus: Defensin SD2 (78 aa).

Residues 1-20 form the signal peptide; that stretch reads MKSSMKMFAALLLVVMCLLA. 4 disulfide bridges follow: Cys-34/Cys-78, Cys-45/Cys-65, Cys-51/Cys-72, and Cys-55/Cys-74.

It belongs to the DEFL family. As to expression, highest expression in flowers and to a lesser extent in leaves. Lower levels in hypocotyls. No expression in roots and cotyledons.

Its subcellular location is the secreted. It localises to the cell wall. May play a protective role in flowers by protecting the reproductive organs from potential pathogen attack. The sequence is that of Defensin SD2 (SD2) from Helianthus annuus (Common sunflower).